We begin with the raw amino-acid sequence, 138 residues long: Class I hydrophobin 1 (138 aa).

The N-terminal stretch at 1–19 is a signal peptide; the sequence is MRFSAATVSALAMALTVAA. 4 disulfide bridges follow: Cys45–Cys113, Cys53–Cys107, Cys54–Cys91, and Cys114–Cys131.

It belongs to the fungal hydrophobin family. As to quaternary structure, interacts with the lipid droplet coating protein Cap20.

It is found in the secreted. It localises to the lipid droplet. Aerial growth, conidiation, and dispersal of filamentous fungi in the environment rely upon a capability of their secreting small amphipathic proteins called hydrophobins (HPBs) with low sequence identity. Class I can self-assemble into an outermost layer of rodlet bundles on aerial cell surfaces, conferring cellular hydrophobicity that supports fungal growth, development and dispersal; whereas Class II form highly ordered films at water-air interfaces through intermolecular interactions but contribute nothing to the rodlet structure. Hydr1 is a class I hydrophobin involved in spore germination, appressorium formation, but not in the formation of the rodlet layer of conidia. Responsible for the full virulence on rubber tree leaves. The polypeptide is Class I hydrophobin 1 (Colletotrichum siamense (Anthracnose fungus)).